Consider the following 114-residue polypeptide: UPF0145 protein Acry_1752 (114 aa).

The protein belongs to the UPF0145 family.

The polypeptide is UPF0145 protein Acry_1752 (Acidiphilium cryptum (strain JF-5)).